An 810-amino-acid chain; its full sequence is AMP deaminase (810 aa).

The span at 1-10 shows a compositional bias: polar residues; that stretch reads MDNQATQRLN. Disordered stretches follow at residues 1 to 61 and 114 to 137; these read MDNQ…SHES and AAMN…PRTL. A phosphoserine mark is found at Ser-19, Ser-58, and Ser-61. Polar residues predominate over residues 125 to 137; the sequence is HASQNSGGKPRTL. The residue at position 138 (Ser-138) is a Phosphoserine. Zn(2+) contacts are provided by His-362 and His-364. Substrate-binding positions include His-364 and 433–438; that span reads KFNLKY. His-630 is a binding site for Zn(2+). Residue Glu-633 participates in substrate binding. His-652 acts as the Proton acceptor in catalysis. Residue Asp-707 participates in Zn(2+) binding. 708-711 lines the substrate pocket; sequence DPLQ.

Belongs to the metallo-dependent hydrolases superfamily. Adenosine and AMP deaminases family. Homotetramer. Requires Zn(2+) as cofactor.

It carries out the reaction AMP + H2O + H(+) = IMP + NH4(+). It functions in the pathway purine metabolism; IMP biosynthesis via salvage pathway; IMP from AMP: step 1/1. In terms of biological role, AMP deaminase plays a critical role in energy metabolism. The polypeptide is AMP deaminase (AMD1) (Saccharomyces cerevisiae (strain ATCC 204508 / S288c) (Baker's yeast)).